The chain runs to 486 residues: Glutamyl-tRNA(Gln) amidotransferase subunit A (486 aa).

Residues Lys77 and Ser152 each act as charge relay system in the active site. Catalysis depends on Ser176, which acts as the Acyl-ester intermediate.

This sequence belongs to the amidase family. GatA subfamily. As to quaternary structure, heterotrimer of A, B and C subunits.

It carries out the reaction L-glutamyl-tRNA(Gln) + L-glutamine + ATP + H2O = L-glutaminyl-tRNA(Gln) + L-glutamate + ADP + phosphate + H(+). Allows the formation of correctly charged Gln-tRNA(Gln) through the transamidation of misacylated Glu-tRNA(Gln) in organisms which lack glutaminyl-tRNA synthetase. The reaction takes place in the presence of glutamine and ATP through an activated gamma-phospho-Glu-tRNA(Gln). The protein is Glutamyl-tRNA(Gln) amidotransferase subunit A of Pediococcus pentosaceus (strain ATCC 25745 / CCUG 21536 / LMG 10740 / 183-1w).